A 323-amino-acid chain; its full sequence is Dof zinc finger protein DOF3.6 (323 aa).

The segment at 76–130 adopts a Dof-type zinc-finger fold; sequence LNCPRCDSTNTKFCYFNNYSLTQPRHFCKTCRRYWTRGGSLRNVPVGGGFRRNKR. Residues Cys78, Cys81, Cys103, and Cys106 each coordinate Zn(2+). Disordered stretches follow at residues 121–160 and 304–323; these read VGGGFRRNKRSKSRSKSTVVVSTDNTTSTSSLTSRPSYSN and GGNSSWTGFTSNNSTGHLSF. Over residues 126–135 the composition is skewed to basic residues; sequence RRNKRSKSRS. A compositionally biased stretch (low complexity) spans 136-159; the sequence is KSTVVVSTDNTTSTSSLTSRPSYS.

As to quaternary structure, interacts with OBF4. In terms of tissue distribution, predominantly expressed in roots.

The protein resides in the nucleus. Transcription factor that binds specifically to a 5'-AA[AG]G-3' consensus core sequence. Enhances the DNA binding of OBF transcription factors to OCS elements. This is Dof zinc finger protein DOF3.6 (DOF3.6) from Arabidopsis thaliana (Mouse-ear cress).